A 473-amino-acid chain; its full sequence is Ammonium transporter Rh type C (473 aa).

Residues 1-9 lie on the Cytoplasmic side of the membrane; that stretch reads MLRNSNMRW. A helical transmembrane segment spans residues 10–30; sequence RLPLICFVWEIAMIVLFGIFV. The Extracellular segment spans residues 31 to 61; that stretch reads RYNDEADPHWPIFMKHENITSDIENDFYFRY. Residue N48 is glycosylated (N-linked (GlcNAc...) asparagine). A helical transmembrane segment spans residues 62 to 82; sequence PSFQDVHVMIFVGFGFLMTFL. Over 83–86 the chain is Cytoplasmic; it reads QRYG. The chain crosses the membrane as a helical span at residues 87–107; sequence FGSVAFNFLLAAFGIQWALLM. Topologically, residues 108–125 are extracellular; it reads QGWFHTFVNGKILIGVES. The chain crosses the membrane as a helical span at residues 126–145; it reads LINADFCVGSVCIAFGGVLG. Over 146–151 the chain is Cytoplasmic; sequence KVSPVQ. Residues 152–171 traverse the membrane as a helical segment; sequence IMLMTLFQVTLFAVNEWILL. The Extracellular segment spans residues 172–179; sequence NKLHVIDA. Residues 180 to 200 traverse the membrane as a helical segment; that stretch reads GGSMTIHTFGAYFGLTVAWIL. The Cytoplasmic portion of the chain corresponds to 201-219; sequence SRPKLKQNNDKEGSTYISD. Residues 220 to 240 traverse the membrane as a helical segment; sequence LFSMIGTLFLWMYWPSFNSAI. Residues 241–251 lie on the Extracellular side of the membrane; that stretch reads SYHGDAQHRAA. Residues 252–272 traverse the membrane as a helical segment; sequence INTYCSLAACVLTTVAISSVV. Over 273–285 the chain is Cytoplasmic; the sequence is NKKGKLEMVHIQN. A helical membrane pass occupies residues 286–306; sequence ATLAGGVAVGTAAEMMLTPYG. A topological domain (extracellular) is located at residue S307. A helical membrane pass occupies residues 308 to 328; it reads LIVGFICGIVSTLGFTYLSPI. The Cytoplasmic segment spans residues 329–343; sequence LSNKLRLHDTCGIHN. Residues 344–364 form a helical membrane-spanning segment; that stretch reads LHAIPGLIGGIVGAVTAACAT. The Extracellular segment spans residues 365–396; the sequence is EGVYTAEGLKKMFHFEGEYADRTPSIQGIYQA. Residues 397–417 form a helical membrane-spanning segment; the sequence is AGIGVSLAFGIVGGTVVGCIL. Over 418-473 the chain is Cytoplasmic; it reads KLPIWGDPSDENCFDDDVYWELREEDEEEHLGAANQYITHLPENFKLPDRTEISFK.

It belongs to the ammonium transporter (TC 2.A.49) family. Rh subfamily. Homotrimer.

It localises to the apical cell membrane. Functions as an ammonia transporter. This is Ammonium transporter Rh type C (rhcg) from Xenopus laevis (African clawed frog).